Here is a 297-residue protein sequence, read N- to C-terminus: Mitochondrial glycine transporter (297 aa).

Solcar repeat units follow at residues threonine 5–alanine 81, leucine 105–threonine 189, and threonine 211–histidine 295. 6 helical membrane-spanning segments follow: residues leucine 8 to glutamine 33, glycine 56 to leucine 82, leucine 111 to glutamate 136, glycine 164 to lysine 187, isoleucine 215 to methionine 241, and glycine 270 to isoleucine 288.

Belongs to the mitochondrial carrier (TC 2.A.29) family. SLC25A38 subfamily.

The protein localises to the mitochondrion inner membrane. The enzyme catalyses glycine(in) = glycine(out). Functionally, mitochondrial glycine transporter that imports glycine into the mitochondrial matrix. Plays an important role in providing glycine for the first enzymatic step in heme biosynthesis, the condensation of glycine with succinyl-CoA to produce 5-aminolevulinate (ALA) in the mitochondrial matrix. In Candida glabrata (strain ATCC 2001 / BCRC 20586 / JCM 3761 / NBRC 0622 / NRRL Y-65 / CBS 138) (Yeast), this protein is Mitochondrial glycine transporter.